A 193-amino-acid polypeptide reads, in one-letter code: Sporulation-specific transcriptional regulator GerR (193 aa).

One can recognise an HTH myb-type domain in the interval 1 to 61; sequence MTITRQDAWT…RWNSYVRKQY (61 aa). The segment at residues 35-57 is a DNA-binding region (H-T-H motif); that stretch reads FEEVGRALTRTAAACGFRWNSYV. Positions 122–177 form a coiled coil; the sequence is AQEFQLEREKLKEQIQSLQKELEDLRSENQTLRNQLEMTEEDYKALIDIMDRARKM.

The protein belongs to the RsfA transcriptional regulator family.

Functionally, transcriptional factor that regulates the expression of several late sporulation genes. Controls genes of both sigma-E and sigma-K regulons, acting alone on some genes and in conjunction with SpoIIID or GerE on others. Regulates, directly or indirectly, the expression of genes encoding coat proteins such as cgeA, cotB, cotC, cotG, cotU and cotY. Controls late sporulation genes in two ways: directly, by binding to the promoter region of genes such as cotB, cotU and spoVIF, and acting directly on their transcription, and indirectly, through the activation of SpoVIF, which stabilizes the transcriptional activator GerE and consequently induces the expression of the GerE-dependent genes, such as cotC and cotG. Its effect is strongly positive on spoVIF, cotC, and cotG, weakly positive on cotB, and negative on cotU. In Bacillus subtilis (strain 168), this protein is Sporulation-specific transcriptional regulator GerR.